Reading from the N-terminus, the 494-residue chain is NAD(P)H-quinone oxidoreductase subunit 2 B, chloroplastic (494 aa).

The next 14 helical transmembrane spans lie at 13–33, 39–59, 81–101, 107–127, 131–151, 166–186, 211–231, 243–263, 277–297, 305–325, 336–356, 378–398, 411–433, and 468–488; these read SILP…IDLI, TPWL…ILLF, IFRL…IDYI, ALTE…FLCC, LVTI…LSGY, LLMG…LYGL, MFIS…LVPF, PTPV…ALAT, WHLL…FIAV, MLAY…IAAE, YMLI…LFGL, LSLV…GFFG, LYFL…LKII, and MIIC…IIAI.

The protein belongs to the complex I subunit 2 family. As to quaternary structure, NDH is composed of at least 16 different subunits, 5 of which are encoded in the nucleus.

Its subcellular location is the plastid. It localises to the chloroplast thylakoid membrane. It catalyses the reaction a plastoquinone + NADH + (n+1) H(+)(in) = a plastoquinol + NAD(+) + n H(+)(out). It carries out the reaction a plastoquinone + NADPH + (n+1) H(+)(in) = a plastoquinol + NADP(+) + n H(+)(out). In terms of biological role, NDH shuttles electrons from NAD(P)H:plastoquinone, via FMN and iron-sulfur (Fe-S) centers, to quinones in the photosynthetic chain and possibly in a chloroplast respiratory chain. The immediate electron acceptor for the enzyme in this species is believed to be plastoquinone. Couples the redox reaction to proton translocation, and thus conserves the redox energy in a proton gradient. The sequence is that of NAD(P)H-quinone oxidoreductase subunit 2 B, chloroplastic from Angiopteris evecta (Mule's foot fern).